The following is a 158-amino-acid chain: Small ribosomal subunit protein uS15 (158 aa).

Residues 1 to 18 show a composition bias toward basic residues; it reads MARMHARKRGKSGSKRPP. A disordered region spans residues 1–21; that stretch reads MARMHARKRGKSGSKRPPRTA.

It belongs to the universal ribosomal protein uS15 family. Part of the 30S ribosomal subunit.

The chain is Small ribosomal subunit protein uS15 from Pyrococcus abyssi (strain GE5 / Orsay).